We begin with the raw amino-acid sequence, 774 residues long: Dapper homolog 2 (774 aa).

A coiled-coil region spans residues 67–93 (PEQQLEAALAALQEQLSRLRQQDIGLK). 4 disordered regions span residues 188–225 (RPQA…LDRA), 295–319 (TPQR…TIQT), 345–500 (TPAK…EKIK), and 624–710 (CPES…GAQS). Positions 438–452 (VQASPSSKAQQTPSA) are enriched in polar residues. A compositionally biased stretch (low complexity) spans 637–648 (RRAGGPLARGRP). Basic and acidic residues-rich tracts occupy residues 655 to 672 (AYTR…ECDP) and 686 to 700 (SSDH…RESS). The PDZ-binding signature appears at 771–774 (MTMV).

It belongs to the dapper family. As to quaternary structure, can form homodimers and heterodimers with DACT1 or DACT3. Interacts with CSNK1D, PKA catalytic subunit, PKC-type kinase, CSNK2B, DVL1, DVL2, DVL3, VANGL1, VANGL2, TGFBR1, CTNNB1, CTNND2, CTNND1, LEF1, TCF7, TCF7L1 and HDAC1.

In terms of biological role, involved in regulation of intracellular signaling pathways during development. Negatively regulates the Nodal signaling pathway, possibly by promoting the lysosomal degradation of Nodal receptors, such as TGFBR1. May be involved in control of the morphogenetic behavior of kidney ureteric bud cells by keeping cells epithelial and restraining their mesenchymal character. May play an inhibitory role in the re-epithelialization of skin wounds by attenuating TGF-beta signaling. This is Dapper homolog 2 (DACT2) from Homo sapiens (Human).